The sequence spans 3919 residues: Intermembrane lipid transfer protein Vps13D (3919 aa).

The Chorein N-terminal domain maps to 4 to 114 (DLITWVLNTY…QDLEYKLAVL (111 aa)). A disordered region spans residues 706–736 (TSDDDETYLTPCSTPPASEKSGSESPTLLEN). The UBA domain occupies 2292–2334 (KADSDLEKAAPLVAMGFEISDCLYAMQINNWRINDAAIWLSQQ). The 277-residue stretch at 2837 to 3113 (ELYISAPVWI…YVMDDPLGQQ (277 aa)) folds into the SHR-BD domain. A disordered region spans residues 3749–3768 (VRETSRDSHRNAPERKRLPR). Over residues 3751–3764 (ETSRDSHRNAPERK) the composition is skewed to basic and acidic residues.

It belongs to the VPS13 family. In terms of tissue distribution, expressed in intestinal cells (at protein level).

Its subcellular location is the cytoplasm. The protein localises to the lysosome. Functionally, mediates the transfer of lipids between membranes at organelle contact sites. Functions in promoting mitochondrial clearance by mitochondrial autophagy (mitophagy), also possibly by positively regulating mitochondrial fission. Mitophagy plays an important role in regulating cell health and mitochondrial size and homeostasis. The protein is Intermembrane lipid transfer protein Vps13D of Drosophila melanogaster (Fruit fly).